We begin with the raw amino-acid sequence, 192 residues long: uncharacterized protein (192 aa).

The Nudix hydrolase domain maps to 29–160; sequence HRQAAVLIPI…PLDIYRRGDS (132 aa). Positions 67-89 match the Nudix box motif; sequence GAVDDTDTSVIAAALREAEEEVA. Residues Glu83 and Glu87 each coordinate Mg(2+).

Belongs to the Nudix hydrolase family. PCD1 subfamily. Mn(2+) serves as cofactor. The cofactor is Mg(2+).

Probably mediates the hydrolysis of some nucleoside diphosphate derivatives. This is an uncharacterized protein from Escherichia coli O6:H1 (strain CFT073 / ATCC 700928 / UPEC).